The chain runs to 405 residues: MNHLPMPTFGPLAGVRVVFSGIEIAGPFAGQMFAEWGAEVIWIENVAWADTIRVQPNYPQLSRRNLHALSLNIFKDEGREAFLKLMETTDIFIEASKGPAFARRGITDEVLWEHNPKLVIAHLSGFGQYGTEEYTNLPAYNTIAQAFSGYLIQNGDVDQPMPAFPYTADYFSGMTATTAALAALHKVRETGKGESIDIAMYEVMLRMGQYFMMDYFNGGEICPRMTKGKDPYYAGCGLYKCADGYIVMELVGITQINECFKDIGLAHILGTPEVPEGTQLIHRVECPYGPLVEEKLDAWLATHTIAEVQARFAELNIACAKVLTIPELEGNPQYVARESITQWQTMDGRTCKGPNIMPKFKNNPGKIWRGMPSHGMDTAAILKNIGYSEADIKELVGKGLAKVED.

CoA-binding residues include Lys97 and Arg104. Catalysis depends on Asp169, which acts as the Nucleophile.

The protein belongs to the CoA-transferase III family. CaiB subfamily. In terms of assembly, homodimer.

The protein resides in the cytoplasm. It carries out the reaction crotonobetainyl-CoA + (R)-carnitine = crotonobetaine + (R)-carnitinyl-CoA. The catalysed reaction is 4-(trimethylamino)butanoyl-CoA + (R)-carnitine = (R)-carnitinyl-CoA + 4-(trimethylamino)butanoate. Its pathway is amine and polyamine metabolism; carnitine metabolism. Its function is as follows. Catalyzes the reversible transfer of the CoA moiety from gamma-butyrobetainyl-CoA to L-carnitine to generate L-carnitinyl-CoA and gamma-butyrobetaine. Is also able to catalyze the reversible transfer of the CoA moiety from gamma-butyrobetainyl-CoA or L-carnitinyl-CoA to crotonobetaine to generate crotonobetainyl-CoA. The chain is L-carnitine CoA-transferase from Salmonella enteritidis PT4 (strain P125109).